The primary structure comprises 580 residues: 2-succinyl-5-enolpyruvyl-6-hydroxy-3-cyclohexene-1-carboxylate synthase (580 aa).

This sequence belongs to the TPP enzyme family. MenD subfamily. Homodimer. Mg(2+) serves as cofactor. The cofactor is Mn(2+). Requires thiamine diphosphate as cofactor.

The catalysed reaction is isochorismate + 2-oxoglutarate + H(+) = 5-enolpyruvoyl-6-hydroxy-2-succinyl-cyclohex-3-ene-1-carboxylate + CO2. Its pathway is quinol/quinone metabolism; 1,4-dihydroxy-2-naphthoate biosynthesis; 1,4-dihydroxy-2-naphthoate from chorismate: step 2/7. It participates in quinol/quinone metabolism; menaquinone biosynthesis. Its function is as follows. Catalyzes the thiamine diphosphate-dependent decarboxylation of 2-oxoglutarate and the subsequent addition of the resulting succinic semialdehyde-thiamine pyrophosphate anion to isochorismate to yield 2-succinyl-5-enolpyruvyl-6-hydroxy-3-cyclohexene-1-carboxylate (SEPHCHC). This chain is 2-succinyl-5-enolpyruvyl-6-hydroxy-3-cyclohexene-1-carboxylate synthase, found in Listeria welshimeri serovar 6b (strain ATCC 35897 / DSM 20650 / CCUG 15529 / CIP 8149 / NCTC 11857 / SLCC 5334 / V8).